A 49-amino-acid chain; its full sequence is Turripeptide OL47 (49 aa).

Residues 28 to 49 form a disordered region; that stretch reads RSDTEKKCTGGPDPCPPRQWPD. Residues 40-49 are compositionally biased toward pro residues; that stretch reads DPCPPRQWPD.

Contains 4 disulfide bonds. In terms of tissue distribution, expressed by the venom duct.

The protein localises to the secreted. Acts as a neurotoxin by inhibiting an ion channel. The protein is Turripeptide OL47 of Iotyrris olangoensis (Sea snail).